A 356-amino-acid polypeptide reads, in one-letter code: Phosphoribosyl pyrophosphate synthase-associated protein 1 (356 aa).

Residue M1 is modified to N-acetylmethionine. Phosphoserine is present on residues S177 and S215.

This sequence belongs to the ribose-phosphate pyrophosphokinase family. In terms of assembly, binds to PRPS1 and PRPS2.

Functionally, seems to play a negative regulatory role in 5-phosphoribose 1-diphosphate synthesis. The polypeptide is Phosphoribosyl pyrophosphate synthase-associated protein 1 (PRPSAP1) (Bos taurus (Bovine)).